Here is a 99-residue protein sequence, read N- to C-terminus: Acylphosphatase (99 aa).

The Acylphosphatase-like domain maps to 10 to 99 (RLTAFVHGHV…PRGVEGFTER (90 aa)). Active-site residues include Arg25 and Asn43.

It belongs to the acylphosphatase family.

It carries out the reaction an acyl phosphate + H2O = a carboxylate + phosphate + H(+). In Corynebacterium efficiens (strain DSM 44549 / YS-314 / AJ 12310 / JCM 11189 / NBRC 100395), this protein is Acylphosphatase (acyP).